The sequence spans 602 residues: ATP-dependent DNA helicase XPD (602 aa).

A Helicase ATP-binding domain is found at 1 to 247 (MQKSYGVALE…DLIEMIRSAL (247 aa)). 11–18 (SPTGSGKT) contacts ATP. Cys-74, Cys-95, Cys-110, and Cys-146 together coordinate [4Fe-4S] cluster. Residues 193–196 (DEAH) carry the DEAH box motif. One can recognise a Helicase C-terminal domain in the interval 421 to 602 (VIEDIILKVK…SAQAREKYGA (182 aa)). The ssDNA site is built by Trp-531 and Arg-566.

The protein belongs to the helicase family. RAD3/XPD subfamily. Monomer. The cofactor is [4Fe-4S] cluster.

The enzyme catalyses Couples ATP hydrolysis with the unwinding of duplex DNA at the replication fork by translocating in the 5'-3' direction. This creates two antiparallel DNA single strands (ssDNA). The leading ssDNA polymer is the template for DNA polymerase III holoenzyme which synthesizes a continuous strand.. It catalyses the reaction ATP + H2O = ADP + phosphate + H(+). In terms of biological role, ATP-dependent 5'-3' DNA helicase. Thought to be involved in nucleotide excision repair (NER) of DNA. The chain is ATP-dependent DNA helicase XPD from Thermoplasma acidophilum (strain ATCC 25905 / DSM 1728 / JCM 9062 / NBRC 15155 / AMRC-C165).